The primary structure comprises 265 residues: Urease accessory protein UreH (265 aa).

This sequence belongs to the UreD family. In terms of assembly, ureH, UreF and UreG form a complex that acts as a GTP-hydrolysis-dependent molecular chaperone, activating the urease apoprotein by helping to assemble the nickel containing metallocenter of UreC. The UreE protein probably delivers the nickel.

It is found in the cytoplasm. Required for maturation of urease via the functional incorporation of the urease nickel metallocenter. In Helicobacter pylori (strain G27), this protein is Urease accessory protein UreH.